The primary structure comprises 249 residues: tRNA pseudouridine synthase A (249 aa).

The active-site Nucleophile is the Asp53. Substrate is bound at residue Tyr111.

This sequence belongs to the tRNA pseudouridine synthase TruA family. As to quaternary structure, homodimer.

It carries out the reaction uridine(38/39/40) in tRNA = pseudouridine(38/39/40) in tRNA. Formation of pseudouridine at positions 38, 39 and 40 in the anticodon stem and loop of transfer RNAs. In Streptococcus suis (strain 05ZYH33), this protein is tRNA pseudouridine synthase A.